The sequence spans 234 residues: Ubiquinone biosynthesis O-methyltransferase (234 aa).

S-adenosyl-L-methionine-binding residues include Arg40, Gly59, Asp80, and Met123.

This sequence belongs to the methyltransferase superfamily. UbiG/COQ3 family.

It carries out the reaction a 3-demethylubiquinol + S-adenosyl-L-methionine = a ubiquinol + S-adenosyl-L-homocysteine + H(+). The catalysed reaction is a 3-(all-trans-polyprenyl)benzene-1,2-diol + S-adenosyl-L-methionine = a 2-methoxy-6-(all-trans-polyprenyl)phenol + S-adenosyl-L-homocysteine + H(+). The protein operates within cofactor biosynthesis; ubiquinone biosynthesis. O-methyltransferase that catalyzes the 2 O-methylation steps in the ubiquinone biosynthetic pathway. In Coxiella burnetii (strain CbuK_Q154) (Coxiella burnetii (strain Q154)), this protein is Ubiquinone biosynthesis O-methyltransferase.